Consider the following 89-residue polypeptide: Protein YihD (89 aa).

This sequence to H.influenzae HI_0845.

This Escherichia coli O157:H7 protein is Protein YihD (yihD).